The primary structure comprises 446 residues: uncharacterized protein (446 aa).

2 positions are modified to phosphoserine: serine 393 and serine 397. The segment at 411 to 431 is disordered; that stretch reads LSSTERRDLDRVRDKQKKQDQ.

Belongs to the IFRD family.

It localises to the cytoplasm. This is an uncharacterized protein from Schizosaccharomyces pombe (strain 972 / ATCC 24843) (Fission yeast).